Consider the following 852-residue polypeptide: MSSVNQIYDLFPNKHNIQFTDSHSQEHDTSSSLAKNDTDGTISIPGSIDTGILKSIIEEQGWNDAELYRSSIQNQRFFLTDKYTKKKHLTMEDMLSPEEEQIYQEPIQDFQTYNKRVQREYELRERMEEFFRQNTKNDLHILNEDSLNQQYSPLGPADYVLPLDRYSRMKHIASNFFRKKLGIPRKLKRRSHYNPNAEGHTKGNSSILSSTTDVIDNASYRNIAIDENVDITHKEHAIDEINEQGASGSESVVEGGSLLHDIEKVFNRSRATRKYHIQRKLKVRHIQMLSIGACFSVGLFLTSGKAFSIAGPFGTLLGFGLTGSIILATMLSFTELSTLIPVSSGFSGLASRFVEDAFGFALGWTYWISCMLALPAQVSSSTFYLSYYNNVNISKGVTAGFITLFSAFSIVVNLLDVSIMGEIVYVAGISKVIIAILMVFTMIILNAGHGNDIHEGVGFRYWDSSKSVRNLTYGLYRPTFDLADAGEGSKKGISGPKGRFLATASVMLISTFAFSGVEMTFLASGEAINPRKTIPSATKRTFSIVLISYVFLIFSVGINIYSGDPRLLSYFPGISEKRYEAIIKGTGMDWRLRTNCRGGIDYRQISVGTGYSSPWVVALQNFGLCTFASAFNAILIFFTATAGISSLFSCSRTLYAMSVQRKAPPVFEICSKRGVPYVSVIFSSLFSVIAYIAVDQTAIENFDVLANVSSASTSIIWMGLNLSFLRFYYALKQRKDIISRNDSSYPYKSPFQPYLAIYGLVGCSLFVIFMGYPNFIHHFWSTKAFFSAYGGLMFFFISYTAYKVLGTSKIQRLDQLDMDSGRREMDRTDWTEHSQYLGTYRERAKKLVTWLI.

Residues Met1–His285 are Cytoplasmic-facing. Residues Asp21 to Thr41 are disordered. Positions Ser30 to Thr41 are enriched in polar residues. A helical membrane pass occupies residues Ile286–Ala306. The Extracellular portion of the chain corresponds to Phe307–Thr329. Residues Met330–Ala350 traverse the membrane as a helical segment. The Cytoplasmic segment spans residues Ser351–Ala357. A helical membrane pass occupies residues Phe358–Val378. Residues Ser379–Gly400 are Extracellular-facing. The helical transmembrane segment at Phe401–Gly421 threads the bilayer. A topological domain (cytoplasmic) is located at residue Glu422. Residues Ile423–Ile443 form a helical membrane-spanning segment. Residues Ile444–Phe500 are Extracellular-facing. The chain crosses the membrane as a helical span at residues Leu501–Phe521. At Leu522–Arg540 the chain is on the cytoplasmic side. The chain crosses the membrane as a helical span at residues Thr541–Tyr561. Residues Ser562–Gly623 are Extracellular-facing. A helical transmembrane segment spans residues Leu624–Ile644. Topologically, residues Ser645–Arg673 are cytoplasmic. A helical transmembrane segment spans residues Gly674–Val694. At Asp695–Asp703 the chain is on the extracellular side. Residues Val704–Phe724 traverse the membrane as a helical segment. The Cytoplasmic portion of the chain corresponds to Leu725–Leu755. A helical transmembrane segment spans residues Ala756–Ile776. Topologically, residues His777 to Ala784 are extracellular. Residues Phe785–Leu805 form a helical membrane-spanning segment. Residues Gly806–Ile852 lie on the Cytoplasmic side of the membrane.

It belongs to the amino acid-polyamine-organocation (APC) superfamily. Component of the plasma membrane SPS (SSY1-PTR3-SSY5) amino acid sensor complex. Interacts directly with PTR3 and SSY5. Interacts with YCK1.

The protein localises to the cell membrane. In terms of biological role, amino acid sensor component of the SPS-sensor system, which regulates the expression of several amino acid-metabolizing enzymes and amino acid- and peptide-permeases in response to extracellular amino acid levels by controlling the activity of two transcription factors, STP1 and STP2. Amino-acid permease homolog that seems to interact directly with the extracellular signaling molecules, but has no amino acid transporter activity. May recruit casein kinases YCK1 and YCK2 to hyperphosphorylate and activate downstream component PTR3 in response to amino acid stimulus. This Saccharomyces cerevisiae (strain ATCC 204508 / S288c) (Baker's yeast) protein is SPS-sensor component SSY1 (SSY1).